Here is a 454-residue protein sequence, read N- to C-terminus: ABSCISIC ACID-INSENSITIVE 5-like protein 6 (454 aa).

Phosphoserine is present on residues Ser32, Ser55, and Ser126. Phosphothreonine is present on Thr169. Residues 372-435 enclose the bZIP domain; the sequence is IERRQKRMIK…KNQLLEPLRQ (64 aa). Residues 374 to 393 are basic motif; the sequence is RRQKRMIKNRESAARSRARK. Positions 400–414 are leucine-zipper; sequence LEAEIAQLKELNEEL.

The protein belongs to the bZIP family. ABI5 subfamily. As to quaternary structure, DNA-binding heterodimer. Interacts with ABI3 and the AFP proteins AFP1, AFP2, AFP3 and AFP4. Expressed in roots and flowers.

It is found in the nucleus. Binds to the ABA-responsive element (ABRE). Mediates stress-responsive ABA signaling. The sequence is that of ABSCISIC ACID-INSENSITIVE 5-like protein 6 (ABF3) from Arabidopsis thaliana (Mouse-ear cress).